The sequence spans 2079 residues: Protein xmas (2079 aa).

One can recognise an RRM domain in the interval 12–83; it reads KTLLCRNIPE…HLFDISYADN (72 aa). A disordered region spans residues 112–152; that stretch reads NEYGSGKPIKKPQNGSSGSGGSSMLPAIPVGPATAPVSRDR. The region spanning 342-525 is the PCI domain; the sequence is DSKINAENLT…ETEYKLPRQY (184 aa). The tract at residues 835–1359 is sufficient for Orc3 binding; sequence PLSFGAENPE…RRDASDHKHA (525 aa). 4 disordered regions span residues 1335–1360, 1755–1778, 1930–1963, and 2032–2079; these read RHTLRELNRSHKSRKRRDASDHKHAM, AEETEDQDTHHRHHGGGQKMSKRA, KAQAKPRSEPKSPSSATDYHRVASQKLPHVTSKA, and SAAA…TGKL. Positions 1764–1776 are enriched in basic residues; that stretch reads HHRHHGGGQKMSK. A compositionally biased stretch (low complexity) spans 2048–2059; that stretch reads PVVSPKVQVPSV. A compositionally biased stretch (polar residues) spans 2070-2079; that stretch reads GPQTTKTGKL.

The protein belongs to the SAC3 family. As to quaternary structure, component of the nuclear pore complex (NPC)-associated TREX-2/AMEX complex (anchoring and mRNA export complex), composed of e(y)2, xmas and PCID2. Within the TREX-2/ AMEX complex, interactions with e(y)2 is required for localization of e(y)2 to the nuclear periphery. Interaction between the TREX-2/AMEX complex and the ORC complex is required for ORC localization to mRNPs, and consequently mRNA export. Within the TREX-2/AMEX-ORC complex, interacts with Orc6, (via C-terminus) with Orc3, and weakly interacts with Orc4. However, another report found that the interaction with Orc3 is not direct, instead it is mediated via e(y)2. Interacts with piwi. Expressed in ovaries (at protein level). As to expression, detected in the testes and ovaries, with expression levels higher in oocytes than in testicular cells (at protein level). In terms of tissue distribution, detected in the testes and ovaries (at protein level). Detected in the testes.

The protein resides in the nucleus. It is found in the nucleoplasm. Its subcellular location is the nucleus membrane. The protein localises to the cytoplasm. Functionally, involved in mRNA export and mRNA coupled transcription activation. Component of the nuclear pore complex (NPC)-associated TREX-2/AMEX complex (anchoring and mRNA export complex) which functions in docking export-competent ribonucleoprotein particles (mRNPs) to the nuclear entrance of the nuclear pore complex (nuclear basket), thereby enabling the export of mRNAs to the cytoplasm through the nuclear pores. The TREX-2/AMEX complex also functions with the transcriptional coactivator SAGA/TFTC complex, to anchor a subset of transcription sites to the nuclear pore complex basket in order to achieve efficient transcription and export of their resulting mRNAs. Within the complex, required for localization of e(y)2 to the nuclear periphery. This Drosophila melanogaster (Fruit fly) protein is Protein xmas.